We begin with the raw amino-acid sequence, 220 residues long: Ribose-5-phosphate isomerase A (220 aa).

Residues 25-28 (TGST), 80-83 (DGAD), and 93-96 (KGGG) contribute to the substrate site. Glu-102 (proton acceptor) is an active-site residue. Lys-120 contributes to the substrate binding site.

It belongs to the ribose 5-phosphate isomerase family. Homodimer.

It catalyses the reaction aldehydo-D-ribose 5-phosphate = D-ribulose 5-phosphate. Its pathway is carbohydrate degradation; pentose phosphate pathway; D-ribose 5-phosphate from D-ribulose 5-phosphate (non-oxidative stage): step 1/1. In terms of biological role, catalyzes the reversible conversion of ribose-5-phosphate to ribulose 5-phosphate. The polypeptide is Ribose-5-phosphate isomerase A (Bacillus cereus (strain ATCC 14579 / DSM 31 / CCUG 7414 / JCM 2152 / NBRC 15305 / NCIMB 9373 / NCTC 2599 / NRRL B-3711)).